Here is a 721-residue protein sequence, read N- to C-terminus: 1,4-alpha-glucan branching enzyme GlgB (721 aa).

D400 acts as the Nucleophile in catalysis. The Proton donor role is filled by E453.

The protein belongs to the glycosyl hydrolase 13 family. GlgB subfamily. Monomer.

It catalyses the reaction Transfers a segment of a (1-&gt;4)-alpha-D-glucan chain to a primary hydroxy group in a similar glucan chain.. Its pathway is glycan biosynthesis; glycogen biosynthesis. Its function is as follows. Catalyzes the formation of the alpha-1,6-glucosidic linkages in glycogen by scission of a 1,4-alpha-linked oligosaccharide from growing alpha-1,4-glucan chains and the subsequent attachment of the oligosaccharide to the alpha-1,6 position. The protein is 1,4-alpha-glucan branching enzyme GlgB of Chlamydia abortus (strain DSM 27085 / S26/3) (Chlamydophila abortus).